We begin with the raw amino-acid sequence, 773 residues long: Ergothioneine biosynthesis protein 1 (773 aa).

Residues proline 16 to tyrosine 322 form an L-histidine N(alpha)-methyltransferase region. Residue tyrosine 51 participates in L-histidine binding. Residues glycine 85, lysine 91, aspartate 112, and cysteine 142–phenylalanine 143 contribute to the S-adenosyl-L-methionine site. Residues asparagine 172, tyrosine 212, and glutamate 287 to serine 289 each bind L-histidine. Residues alanine 347–lysine 772 form a hercynylcysteine S-oxide synthase region. Fe cation-binding residues include histidine 382, histidine 476, and histidine 480.

The protein in the N-terminal section; belongs to the methyltransferase superfamily. EgtD family. It in the C-terminal section; belongs to the EgtB family. Requires Fe(2+) as cofactor.

It is found in the cytoplasm. The protein resides in the nucleus. The enzyme catalyses L-histidine + 3 S-adenosyl-L-methionine = hercynine + 3 S-adenosyl-L-homocysteine + 3 H(+). It catalyses the reaction hercynine + L-cysteine + O2 = S-(hercyn-2-yl)-L-cysteine S-oxide + H2O. Its pathway is amino-acid biosynthesis; ergothioneine biosynthesis. In terms of biological role, catalyzes the SAM-dependent triple methylation of the alpha-amino group of histidine to form hercynine and subsequent conjugation with cysteine and oxygen to form hercynylcysteine sulfoxide, the first two steps in the biosynthesis pathway of ergothioneine. May play a role in meiosis. This Schizosaccharomyces pombe (strain 972 / ATCC 24843) (Fission yeast) protein is Ergothioneine biosynthesis protein 1.